The primary structure comprises 309 residues: Protoheme IX farnesyltransferase (309 aa).

The next 9 membrane-spanning stretches (helical) occupy residues 35-55 (IGIV…ALYF), 64-84 (LHIV…SCSI), 114-134 (VLWL…MTTV), 135-155 (TAAI…TMWS), 161-181 (LNTV…WTAV), 187-207 (VVPL…FLAL), 236-256 (IVVW…LGVP), 257-277 (FLTV…YGFK), and 289-309 (FIYS…ATLW).

The protein belongs to the UbiA prenyltransferase family. Protoheme IX farnesyltransferase subfamily. As to quaternary structure, interacts with CtaA.

The protein localises to the cell membrane. The enzyme catalyses heme b + (2E,6E)-farnesyl diphosphate + H2O = Fe(II)-heme o + diphosphate. It functions in the pathway porphyrin-containing compound metabolism; heme O biosynthesis; heme O from protoheme: step 1/1. In terms of biological role, converts heme B (protoheme IX) to heme O by substitution of the vinyl group on carbon 2 of heme B porphyrin ring with a hydroxyethyl farnesyl side group. The chain is Protoheme IX farnesyltransferase from Geobacillus sp. (strain WCH70).